Here is a 610-residue protein sequence, read N- to C-terminus: MWTFPVEYDVIVIGAGHAGCEAAYCAAKMGASVLLLTSNLDTIAKLSCNPAVGGIGKGHIVREIDALGGVMAEVTDLSGIQFRILNQTKGPAVRAPRAQVDKQLYHIHMKQLLEQVPGLHIMQGTAEALLDDGEKVLGVSTKEGWAYSGETVVLSSGTFMRGLIHIGTQNFSGGRLGDAASLGLSKDLKRLGFPLGRLKTGTPARLLSSSIDFSIMEEQPGDQNVCFVHREEAFVPKLPQVSCHITYTTDKTKDLIANNLHRSALYGGRIEGVGPRYCPSIEDKIVKFADKDRHHIFIEPEGLNTREVYVNGLSTSMPFDVQYEIIRSVAGLENAVITRPAYAIEYDYIQGNVILPSLESKILEGLFLCGQINGTTGYEEAAAQGLIAGVNAVNKVLHRPAFIPSRQESYIGVMLDDLTTQVLDEPYRMFTSRAEHRLLLRQDNAGMRLSHYGHALGLLSSERYAMFQKQKNCIEHEKERLAKTFRKYGDSIVPLTKILCRPEVSYQQLLTEFPEDVKDWGPIIGASLEMEIKYSGYISRQQTLIRSMEKAENTLIPEGIDYHSISALSLEAREKLSKFTPRTIGSAARISGISVADIQVLMVSLKKDAY.

Position 14 to 19 (14 to 19 (GAGHAG)) interacts with FAD. 274-288 (GPRYCPSIEDKIVKF) serves as a coordination point for NAD(+).

Belongs to the MnmG family. Homodimer. Heterotetramer of two MnmE and two MnmG subunits. FAD is required as a cofactor.

It localises to the cytoplasm. In terms of biological role, NAD-binding protein involved in the addition of a carboxymethylaminomethyl (cmnm) group at the wobble position (U34) of certain tRNAs, forming tRNA-cmnm(5)s(2)U34. In Chlamydia muridarum (strain MoPn / Nigg), this protein is tRNA uridine 5-carboxymethylaminomethyl modification enzyme MnmG.